The following is a 206-amino-acid chain: Imidazoleglycerol-phosphate dehydratase (206 aa).

Belongs to the imidazoleglycerol-phosphate dehydratase family.

The protein resides in the cytoplasm. It catalyses the reaction D-erythro-1-(imidazol-4-yl)glycerol 3-phosphate = 3-(imidazol-4-yl)-2-oxopropyl phosphate + H2O. The protein operates within amino-acid biosynthesis; L-histidine biosynthesis; L-histidine from 5-phospho-alpha-D-ribose 1-diphosphate: step 6/9. This is Imidazoleglycerol-phosphate dehydratase from Mycolicibacterium smegmatis (strain ATCC 700084 / mc(2)155) (Mycobacterium smegmatis).